We begin with the raw amino-acid sequence, 38 residues long: Conotoxin r7a (38 aa).

A propeptide spanning residues 1–5 (APAKR) is cleaved from the precursor. Trp-6 is subject to 6'-bromotryptophan. Residues Glu-10 and Glu-11 each carry the 4-carboxyglutamate modification. 3 disulfides stabilise this stretch: Cys-12/Cys-26, Cys-19/Cys-30, and Cys-25/Cys-35. Residue Trp-15 is modified to 6'-bromotryptophan. Residues Glu-20 and Glu-31 each carry the 4-carboxyglutamate modification. At Trp-38 the chain carries 6'-bromotryptophan.

Belongs to the conotoxin O2 superfamily. In terms of tissue distribution, expressed by the venom duct.

It is found in the secreted. In terms of biological role, induces a sleep-like state in mice. In Conus radiatus (Rayed cone), this protein is Conotoxin r7a.